The chain runs to 298 residues: HTH-type transcriptional regulator ArgP (298 aa).

The HTH lysR-type domain maps to 4 to 60; it reads LDYKWIEALDAVVAQGGFERAAEELYISQSAVSQRIKQLERFLAQSVLIREQPPKPT. Positions 21 to 40 form a DNA-binding region, H-T-H motif; that stretch reads FERAAEELYISQSAVSQRIK.

Belongs to the LysR transcriptional regulatory family. As to quaternary structure, homodimer.

In terms of biological role, controls the transcription of genes involved in arginine and lysine metabolism. The chain is HTH-type transcriptional regulator ArgP from Vibrio vulnificus (strain YJ016).